The sequence spans 466 residues: Soluble pyridine nucleotide transhydrogenase (466 aa).

FAD is bound at residue 36–45; sequence ERYHNVGGGC.

It belongs to the class-I pyridine nucleotide-disulfide oxidoreductase family. The cofactor is FAD.

Its subcellular location is the cytoplasm. It carries out the reaction NAD(+) + NADPH = NADH + NADP(+). Conversion of NADPH, generated by peripheral catabolic pathways, to NADH, which can enter the respiratory chain for energy generation. This Salmonella gallinarum (strain 287/91 / NCTC 13346) protein is Soluble pyridine nucleotide transhydrogenase.